The following is a 1154-amino-acid chain: ATP-dependent helicase/deoxyribonuclease subunit B (1154 aa).

The region spanning 1-284 (MSVRFIIGRS…EQLRHNVRHK (284 aa)) is the UvrD-like helicase ATP-binding domain. Position 8–15 (8–15 (GRSGSGKT)) interacts with ATP. Residues 279 to 583 (HNVRHKHEEL…QFSLVPPATD (305 aa)) form the UvrD-like helicase C-terminal domain. Positions 799, 1120, 1123, and 1129 each coordinate [4Fe-4S] cluster.

The protein belongs to the helicase family. AddB/RexB type 1 subfamily. As to quaternary structure, heterodimer of AddA and AddB. Mg(2+) is required as a cofactor. Requires [4Fe-4S] cluster as cofactor.

In terms of biological role, the heterodimer acts as both an ATP-dependent DNA helicase and an ATP-dependent, dual-direction single-stranded exonuclease. Recognizes the chi site generating a DNA molecule suitable for the initiation of homologous recombination. The AddB subunit has 5' -&gt; 3' nuclease activity but not helicase activity. The protein is ATP-dependent helicase/deoxyribonuclease subunit B of Anoxybacillus flavithermus (strain DSM 21510 / WK1).